Here is a 156-residue protein sequence, read N- to C-terminus: Crossover junction endodeoxyribonuclease RuvC (156 aa).

Active-site residues include Asp-7, Glu-67, and Asp-140. The Mg(2+) site is built by Asp-7, Glu-67, and Asp-140.

Belongs to the RuvC family. In terms of assembly, homodimer which binds Holliday junction (HJ) DNA. The HJ becomes 2-fold symmetrical on binding to RuvC with unstacked arms; it has a different conformation from HJ DNA in complex with RuvA. In the full resolvosome a probable DNA-RuvA(4)-RuvB(12)-RuvC(2) complex forms which resolves the HJ. The cofactor is Mg(2+).

Its subcellular location is the cytoplasm. The enzyme catalyses Endonucleolytic cleavage at a junction such as a reciprocal single-stranded crossover between two homologous DNA duplexes (Holliday junction).. Its function is as follows. The RuvA-RuvB-RuvC complex processes Holliday junction (HJ) DNA during genetic recombination and DNA repair. Endonuclease that resolves HJ intermediates. Cleaves cruciform DNA by making single-stranded nicks across the HJ at symmetrical positions within the homologous arms, yielding a 5'-phosphate and a 3'-hydroxyl group; requires a central core of homology in the junction. The consensus cleavage sequence is 5'-(A/T)TT(C/G)-3'. Cleavage occurs on the 3'-side of the TT dinucleotide at the point of strand exchange. HJ branch migration catalyzed by RuvA-RuvB allows RuvC to scan DNA until it finds its consensus sequence, where it cleaves and resolves the cruciform DNA. The sequence is that of Crossover junction endodeoxyribonuclease RuvC from Rickettsia felis (strain ATCC VR-1525 / URRWXCal2) (Rickettsia azadi).